We begin with the raw amino-acid sequence, 1496 residues long: DNA-directed RNA polymerase subunit beta' (1496 aa).

Zn(2+)-binding residues include Cys67, Cys69, Cys82, and Cys85. Mg(2+)-binding residues include Asp499, Asp501, and Asp503. 4 residues coordinate Zn(2+): Cys867, Cys943, Cys950, and Cys953.

The protein belongs to the RNA polymerase beta' chain family. In terms of assembly, the RNAP catalytic core consists of 2 alpha, 1 beta, 1 beta' and 1 omega subunit. When a sigma factor is associated with the core the holoenzyme is formed, which can initiate transcription. Mg(2+) serves as cofactor. Requires Zn(2+) as cofactor.

It carries out the reaction RNA(n) + a ribonucleoside 5'-triphosphate = RNA(n+1) + diphosphate. Functionally, DNA-dependent RNA polymerase catalyzes the transcription of DNA into RNA using the four ribonucleoside triphosphates as substrates. This is DNA-directed RNA polymerase subunit beta' from Chlorobium limicola (strain DSM 245 / NBRC 103803 / 6330).